Reading from the N-terminus, the 116-residue chain is Putative oxygen-evolving enhancer protein 1 (116 aa).

Belongs to the PsbO family.

It localises to the plastid. It is found in the chloroplast thylakoid membrane. Its function is as follows. Stabilizes the manganese cluster which is the primary site of water splitting. This is Putative oxygen-evolving enhancer protein 1 from Pinus strobus (Eastern white pine).